The sequence spans 335 residues: Homeobox protein DBX1 (335 aa).

2 disordered regions span residues 58-102 (IPAA…LSPA) and 240-335 (KERE…ITVS). Positions 83–95 (GSPGSGSRRGSSP) are enriched in low complexity. Residues 181–240 (GMLRRAVFSDVQRKALEKTFQKQKYISKPDRKKLASKLGLKDSQVKIWFQNRRMKWRNSK) constitute a DNA-binding region (homeobox). Residues 299–317 (GPLPASPAHSSSPGKPSDF) are compositionally biased toward low complexity. Acidic residues predominate over residues 318 to 335 (SDSDEDEEGEEDEEITVS).

Belongs to the H2.0 homeobox family.

It is found in the nucleus. Functionally, could have a role in patterning the central nervous system during embryogenesis. Has a key role in regulating the distinct phenotypic features that distinguish two major classes of ventral interneurons, V0 and V1 neurons. Regulates the transcription factor profile, neurotransmitter phenotype, intraspinal migratory path and axonal trajectory of V0 neurons, features that differentiate them from an adjacent set of V1 neurons. This chain is Homeobox protein DBX1 (Dbx1), found in Mus musculus (Mouse).